The following is a 63-amino-acid chain: Large ribosomal subunit protein bL32 (63 aa).

The interval 1-20 (MANPKAKMSKSRRDKRRAQF) is disordered. Positions 7 to 18 (KMSKSRRDKRRA) are enriched in basic residues.

Belongs to the bacterial ribosomal protein bL32 family.

The polypeptide is Large ribosomal subunit protein bL32 (Chlorobaculum parvum (strain DSM 263 / NCIMB 8327) (Chlorobium vibrioforme subsp. thiosulfatophilum)).